Here is a 38-residue protein sequence, read N- to C-terminus: Large ribosomal subunit protein bL36 (38 aa).

Belongs to the bacterial ribosomal protein bL36 family.

In Buchnera aphidicola subsp. Acyrthosiphon pisum (strain 5A), this protein is Large ribosomal subunit protein bL36.